Here is a 272-residue protein sequence, read N- to C-terminus: MTTLACRKLAPHPESPRHQHAGPWLVWLHGLLGSRQDWLPVAQLCGDYPSLLIDLPGHGQSVSLSADGFADISRQLSQTLQANGIREYWLAGYSLGGRIAMYHACYGRHHGLQGLLVEGGNLGLENAELRQARLQQDRQWAQRFRQEPLPQVLDDWYQQAVFADLDPQQREQLVLLRADNHGPAVAEMLEATSLGHQPWLLPALQRLNVPYTYLCGDRDHKFLQLAQQYQLPLHTLARAGHNAHRANPGAFAAQVLAFLSQSSCLPPSSLSR.

It belongs to the AB hydrolase superfamily. MenH family. In terms of assembly, monomer.

The catalysed reaction is 5-enolpyruvoyl-6-hydroxy-2-succinyl-cyclohex-3-ene-1-carboxylate = (1R,6R)-6-hydroxy-2-succinyl-cyclohexa-2,4-diene-1-carboxylate + pyruvate. It participates in quinol/quinone metabolism; 1,4-dihydroxy-2-naphthoate biosynthesis; 1,4-dihydroxy-2-naphthoate from chorismate: step 3/7. The protein operates within quinol/quinone metabolism; menaquinone biosynthesis. Functionally, catalyzes a proton abstraction reaction that results in 2,5-elimination of pyruvate from 2-succinyl-5-enolpyruvyl-6-hydroxy-3-cyclohexene-1-carboxylate (SEPHCHC) and the formation of 2-succinyl-6-hydroxy-2,4-cyclohexadiene-1-carboxylate (SHCHC). The chain is 2-succinyl-6-hydroxy-2,4-cyclohexadiene-1-carboxylate synthase from Yersinia pseudotuberculosis serotype O:1b (strain IP 31758).